The sequence spans 147 residues: Testis-expressed protein 29 (147 aa).

The Extracellular portion of the chain corresponds to 1-57 (MRYAPEFKKSPSHLLKKFAVCDIPLYDICDYNVSRDRCKELGCCFYKGICYEKAVPS). Residues 58–78 (YVQVFSALIVIIAGAFVITII) traverse the membrane as a helical segment. The Cytoplasmic portion of the chain corresponds to 79–147 (YRVIQESRRE…IVTEEEETED (69 aa)). Residues 86–147 (RREKEVPTEA…IVTEEEETED (62 aa)) are disordered. Over residues 99 to 108 (AKSSVQVETQ) the composition is skewed to polar residues. The segment covering 109 to 120 (PPSSAGAGSKAP) has biased composition (low complexity). A compositionally biased stretch (basic and acidic residues) spans 125–135 (PQSKESGREDA).

It localises to the membrane. The polypeptide is Testis-expressed protein 29 (TEX29) (Bos taurus (Bovine)).